The following is a 327-amino-acid chain: Ferredoxin--NADP reductase (327 aa).

The FAD site is built by T18, D37, Q45, Y50, A90, F124, D283, and S324.

It belongs to the ferredoxin--NADP reductase type 2 family. In terms of assembly, homodimer. Requires FAD as cofactor.

It carries out the reaction 2 reduced [2Fe-2S]-[ferredoxin] + NADP(+) + H(+) = 2 oxidized [2Fe-2S]-[ferredoxin] + NADPH. This Saccharopolyspora erythraea (strain ATCC 11635 / DSM 40517 / JCM 4748 / NBRC 13426 / NCIMB 8594 / NRRL 2338) protein is Ferredoxin--NADP reductase.